A 1271-amino-acid polypeptide reads, in one-letter code: SR-related and CTD-associated factor 8 (1271 aa).

The region spanning 1 to 139 is the CID domain; it reads MEAVKTFNSE…PLLDMAAGIP (139 aa). At Thr6 the chain carries Phosphothreonine. Residue Lys18 forms a Glycyl lysine isopeptide (Lys-Gly) (interchain with G-Cter in SUMO1) linkage. Positions 270 to 283 are enriched in basic and acidic residues; that stretch reads GEDSEHSEEPKKEI. Disordered regions lie at residues 270–289, 322–354, and 384–468; these read GEDS…SQLS, QQQP…SQQH, and EEVF…PPIR. Ser273 is modified (phosphoserine). Residues 327–354 are compositionally biased toward polar residues; sequence KATPQDSQEGTFGSEHSASPSQGSSQQH. The segment covering 394 to 443 has biased composition (basic residues); sequence VAVRSRSRTHSRSRSRSPRKRRSRSRSGSRKRKHRKRSRSRSRERKRKSS. Residues 447-461 show a composition bias toward basic and acidic residues; the sequence is SSERRAREREKERQK. Residues 477–551 form the RRM domain; that stretch reads TTLWVGQVDK…KVIKIAWALN (75 aa). The residue at position 615 (Thr615) is a Phosphothreonine. Residues Ser617 and Ser779 each carry the phosphoserine modification. The tract at residues 899 to 918 is disordered; it reads TQPPAGPQNLPPLSIPNQRM. Over residues 902–912 the composition is skewed to pro residues; it reads PAGPQNLPPLS. An asymmetric dimethylarginine mark is found at Arg917, Arg927, and Arg938. Composition is skewed to pro residues over residues 945 to 956 and 963 to 972; these read GIPPQRGIPPPS and HPPPRGPFPP. Residues 945 to 1064 form a disordered region; sequence GIPPQRGIPP…DGRDHFGRPP (120 aa). Composition is skewed to basic and acidic residues over residues 1011-1027 and 1034-1064; these read EGDR…RESI and DVRD…GRPP. Asymmetric dimethylarginine is present on Arg1073. The segment at 1198–1271 is disordered; sequence YFEGATSQRK…VVESTETEGT (74 aa). The segment covering 1255-1271 has biased composition (acidic residues); the sequence is ADIESEPVVESTETEGT.

As to quaternary structure, interacts with POLR2A; via C-terminal heptapeptide repeat domain (CTD) phosphorylated at 'Ser-2' and 'Ser-5'. Identified in a complex with CDC5L and other spliceosomal proteins.

The protein resides in the nucleus. It localises to the nucleus matrix. Its function is as follows. Anti-terminator protein required to prevent early mRNA termination during transcription. Together with SCAF4, acts by suppressing the use of early, alternative poly(A) sites, thereby preventing the accumulation of non-functional truncated proteins. Mechanistically, associates with the phosphorylated C-terminal heptapeptide repeat domain (CTD) of the largest RNA polymerase II subunit (POLR2A), and subsequently binds nascent RNA upstream of early polyadenylation sites to prevent premature mRNA transcript cleavage and polyadenylation. Independently of SCAF4, also acts as a positive regulator of transcript elongation. This is SR-related and CTD-associated factor 8 from Homo sapiens (Human).